Here is a 362-residue protein sequence, read N- to C-terminus: Glycyl-glycine endopeptidase ALE-1 (362 aa).

An N-terminal signal peptide occupies residues 1 to 35 (MDTNRKFTLVKSLSIGLGTFLVGSVFLTVNDEASA). The disordered stretch occupies residues 35–110 (ASTKVDAPKV…PAKADAPKVE (76 aa)). The segment covering 40–110 (DAPKVEQEAP…PAKADAPKVE (71 aa)) has biased composition (basic and acidic residues). 2 residues coordinate Zn(2+): H150 and D154. Residue H231 is part of the active site. H233 serves as a coordination point for Zn(2+). The region spanning 282–350 (SESASFTANT…YLPVRTWNES (69 aa)) is the SH3b domain.

This sequence belongs to the peptidase M23B family. Zn(2+) is required as a cofactor.

It localises to the secreted. The enzyme catalyses Hydrolysis of the -Gly-|-Gly- bond in the pentaglycine inter-peptide link joining staphylococcal cell wall peptidoglycans.. Its function is as follows. Lyses staphylococcal cells by hydrolyzing the polyglycine interpeptide bridges of the peptidoglycan. This Staphylococcus capitis protein is Glycyl-glycine endopeptidase ALE-1.